A 506-amino-acid chain; its full sequence is uncharacterized protein (506 aa).

Disordered stretches follow at residues 104-144 (PNSS…ATSS) and 397-456 (QQQK…DQLP). Residues 130-144 (ESSPTLSSSSLATSS) are compositionally biased toward low complexity. The span at 405–443 (IKDEDKNEKENKSENEEKEKEKEKEKEKEKEKEKEKEKE) shows a compositional bias: basic and acidic residues. Residues 405–455 (IKDEDKNEKENKSENEEKEKEKEKEKEKEKEKEKEKEKENEEGEEDNGDQL) are a coiled coil.

This is an uncharacterized protein from Dictyostelium discoideum (Social amoeba).